The following is a 440-amino-acid chain: Serine hydroxymethyltransferase (440 aa).

Residues Leu-119 and Gly-123 to Leu-125 each bind (6S)-5,6,7,8-tetrahydrofolate. Lys-228 bears the N6-(pyridoxal phosphate)lysine mark. Ser-370–Phe-372 contacts (6S)-5,6,7,8-tetrahydrofolate.

This sequence belongs to the SHMT family. Homodimer. Pyridoxal 5'-phosphate serves as cofactor.

Its subcellular location is the cytoplasm. The enzyme catalyses (6R)-5,10-methylene-5,6,7,8-tetrahydrofolate + glycine + H2O = (6S)-5,6,7,8-tetrahydrofolate + L-serine. It functions in the pathway one-carbon metabolism; tetrahydrofolate interconversion. The protein operates within amino-acid biosynthesis; glycine biosynthesis; glycine from L-serine: step 1/1. Functionally, catalyzes the reversible interconversion of serine and glycine with tetrahydrofolate (THF) serving as the one-carbon carrier. This reaction serves as the major source of one-carbon groups required for the biosynthesis of purines, thymidylate, methionine, and other important biomolecules. Also exhibits THF-independent aldolase activity toward beta-hydroxyamino acids, producing glycine and aldehydes, via a retro-aldol mechanism. In Chlorobaculum parvum (strain DSM 263 / NCIMB 8327) (Chlorobium vibrioforme subsp. thiosulfatophilum), this protein is Serine hydroxymethyltransferase.